Reading from the N-terminus, the 393-residue chain is Formate-dependent phosphoribosylglycinamide formyltransferase (393 aa).

N(1)-(5-phospho-beta-D-ribosyl)glycinamide is bound by residues 22–23 and E82; that span reads EL. ATP contacts are provided by residues R114, K155, 160 to 165, 195 to 198, and E203; these read SSGKGQ and EGFI. The ATP-grasp domain occupies 119 to 308; that stretch reads RLAAEELKLP…QFALHARAIL (190 aa). Mg(2+) is bound by residues E267 and E279. Residues D286, K356, and 363 to 364 each bind N(1)-(5-phospho-beta-D-ribosyl)glycinamide; that span reads RR.

This sequence belongs to the PurK/PurT family. As to quaternary structure, homodimer.

It catalyses the reaction N(1)-(5-phospho-beta-D-ribosyl)glycinamide + formate + ATP = N(2)-formyl-N(1)-(5-phospho-beta-D-ribosyl)glycinamide + ADP + phosphate + H(+). The protein operates within purine metabolism; IMP biosynthesis via de novo pathway; N(2)-formyl-N(1)-(5-phospho-D-ribosyl)glycinamide from N(1)-(5-phospho-D-ribosyl)glycinamide (formate route): step 1/1. In terms of biological role, involved in the de novo purine biosynthesis. Catalyzes the transfer of formate to 5-phospho-ribosyl-glycinamide (GAR), producing 5-phospho-ribosyl-N-formylglycinamide (FGAR). Formate is provided by PurU via hydrolysis of 10-formyl-tetrahydrofolate. The chain is Formate-dependent phosphoribosylglycinamide formyltransferase from Pseudomonas savastanoi pv. phaseolicola (strain 1448A / Race 6) (Pseudomonas syringae pv. phaseolicola (strain 1448A / Race 6)).